Consider the following 665-residue polypeptide: Sodium-dependent phosphate transporter 1-B (665 aa).

The next 6 helical transmembrane spans lie at 26 to 46, 67 to 87, 107 to 127, 163 to 183, 202 to 222, and 235 to 255; these read YMWL…SVGA, ACIL…AKVS, LMAG…AASF, IVAS…VLFY, ALPF…MFTG, and GVLL…WFAV. 2 disordered regions span residues 294–345 and 423–442; these read VPEE…APKT and ESEF…AQER. The span at 296 to 306 shows a compositional bias: low complexity; that stretch reads EESSVLSSSTP. A compositionally biased stretch (basic and acidic residues) spans 329–338; the sequence is ADQKDCKESD. Helical transmembrane passes span 499–519, 548–568, 588–608, and 638–658; these read VSML…FAHG, TPIW…WVWG, FSIE…GLPV, and IFMA…AIMA.

Belongs to the inorganic phosphate transporter (PiT) (TC 2.A.20) family.

It localises to the membrane. Sodium-phosphate symporter which plays a fundamental housekeeping role in phosphate transport. This Danio rerio (Zebrafish) protein is Sodium-dependent phosphate transporter 1-B (slc20a1b).